The primary structure comprises 768 residues: Translation initiation factor IF-2, chloroplastic (768 aa).

Disordered regions lie at residues 1 to 20 (MFLNNQNFENRSSRSSSNIN), 54 to 77 (KSESHTGGEQHLELSSPPKLDKKS), and 155 to 176 (KKVAVTPSQNSASIQSNSPPES). Positions 54 to 65 (KSESHTGGEQHL) are enriched in basic and acidic residues. The segment covering 160–176 (TPSQNSASIQSNSPPES) has biased composition (polar residues). Residues 261–434 (KRPPIVTVMG…TLLAELEDLK (174 aa)) enclose the tr-type G domain. GTP-binding positions include 270 to 277 (GHVDHGKT), 320 to 324 (DTPGH), and 374 to 377 (SKID).

This sequence belongs to the TRAFAC class translation factor GTPase superfamily. Classic translation factor GTPase family. IF-2 subfamily.

The protein resides in the plastid. It is found in the chloroplast. Its function is as follows. One of the essential components for the initiation of protein synthesis. Protects formylmethionyl-tRNA from spontaneous hydrolysis and promotes its binding to the 30S ribosomal subunits. Also involved in the hydrolysis of GTP during the formation of the 70S ribosomal complex. This chain is Translation initiation factor IF-2, chloroplastic (infB), found in Pyropia yezoensis (Susabi-nori).